The sequence spans 309 residues: Elongation factor Ts (309 aa).

Residues 82 to 85 (TDFV) are involved in Mg(2+) ion dislocation from EF-Tu.

This sequence belongs to the EF-Ts family.

It is found in the cytoplasm. Functionally, associates with the EF-Tu.GDP complex and induces the exchange of GDP to GTP. It remains bound to the aminoacyl-tRNA.EF-Tu.GTP complex up to the GTP hydrolysis stage on the ribosome. This is Elongation factor Ts (tsf) from Rickettsia prowazekii (strain Madrid E).